Reading from the N-terminus, the 313-residue chain is Protein phosphatase PTC7 homolog fig (313 aa).

A PPM-type phosphatase domain is found at 47-307 (KEPLTDLQLR…DDITVILASL (261 aa)). Residues Asp83, Gly84, and Asp229 each contribute to the Mn(2+) site.

Belongs to the PP2C family. Requires Mg(2+) as cofactor. The cofactor is Mn(2+).

The catalysed reaction is O-phospho-L-seryl-[protein] + H2O = L-seryl-[protein] + phosphate. It catalyses the reaction O-phospho-L-threonyl-[protein] + H2O = L-threonyl-[protein] + phosphate. The polypeptide is Protein phosphatase PTC7 homolog fig (Drosophila virilis (Fruit fly)).